The chain runs to 222 residues: MIF4G domain-containing protein (222 aa).

In terms of domain architecture, MIF4G spans 3-205; it reads EPSREEYKIQ…LEIIEFRAAG (203 aa).

It belongs to the MIF4GD family. Interacts with EIF4G1, EIF4G2 and SLBP; probably tethered by SLBP to the 3'-end of mRNAs ending with the histone stem-loop, it also interacts with EIF4G1 which is bound to their 5'-end.

It localises to the cytoplasm. It is found in the nucleus. In terms of biological role, functions in replication-dependent translation of histone mRNAs which differ from other eukaryotic mRNAs in that they do not end with a poly-A tail but a stem-loop. May participate in circularizing those mRNAs specifically enhancing their translation. This Homo sapiens (Human) protein is MIF4G domain-containing protein (MIF4GD).